A 490-amino-acid polypeptide reads, in one-letter code: Cytochrome P450 2C1 (490 aa).

Position 435 (Cys-435) interacts with heme.

Belongs to the cytochrome P450 family. Heme is required as a cofactor.

The protein localises to the endoplasmic reticulum membrane. The protein resides in the microsome membrane. The catalysed reaction is an organic molecule + reduced [NADPH--hemoprotein reductase] + O2 = an alcohol + oxidized [NADPH--hemoprotein reductase] + H2O + H(+). In terms of biological role, cytochromes P450 are a group of heme-thiolate monooxygenases. In liver microsomes, this enzyme is involved in an NADPH-dependent electron transport pathway. It oxidizes a variety of structurally unrelated compounds, including steroids, fatty acids, and xenobiotics. This Oryctolagus cuniculus (Rabbit) protein is Cytochrome P450 2C1 (CYP2C1).